Here is a 358-residue protein sequence, read N- to C-terminus: 3-isopropylmalate dehydrogenase (358 aa).

75–88 contributes to the NAD(+) binding site; that stretch reads GPKWETLPPEKQPE. Substrate contacts are provided by Arg96, Arg106, Arg135, and Asp225. Asp225, Asp249, and Asp253 together coordinate Mg(2+). An NAD(+)-binding site is contributed by 283–295; the sequence is GSAPDIAGKGVAN.

It belongs to the isocitrate and isopropylmalate dehydrogenases family. LeuB type 1 subfamily. As to quaternary structure, homodimer. Mg(2+) serves as cofactor. It depends on Mn(2+) as a cofactor.

The protein localises to the cytoplasm. It catalyses the reaction (2R,3S)-3-isopropylmalate + NAD(+) = 4-methyl-2-oxopentanoate + CO2 + NADH. It participates in amino-acid biosynthesis; L-leucine biosynthesis; L-leucine from 3-methyl-2-oxobutanoate: step 3/4. Its function is as follows. Catalyzes the oxidation of 3-carboxy-2-hydroxy-4-methylpentanoate (3-isopropylmalate) to 3-carboxy-4-methyl-2-oxopentanoate. The product decarboxylates to 4-methyl-2 oxopentanoate. The polypeptide is 3-isopropylmalate dehydrogenase (Leptospira interrogans serogroup Icterohaemorrhagiae serovar copenhageni (strain Fiocruz L1-130)).